The chain runs to 202 residues: MNVAGLIVGLGNPGKEYERTRHNLGFMAVDALMEAAARETGGGCDQLSGGKKKYDLWRCRITPTGDPWLVAKPQTFMNLSGEAVLAIASYYRIKPDAILVVHDELDIPLGRMKFKTGGGNAGHNGLKSITQLLGTPDFHRLRLGIGRSPHGGETTNWVLGRLSGPEQTLLDTLLPAAVQAMTIFASQGAAAATQFANAYKPD.

Residue Tyr-17 participates in tRNA binding. His-22 serves as the catalytic Proton acceptor. TRNA-binding residues include Phe-76, Asn-78, and Asn-124.

The protein belongs to the PTH family. In terms of assembly, monomer.

It localises to the cytoplasm. It carries out the reaction an N-acyl-L-alpha-aminoacyl-tRNA + H2O = an N-acyl-L-amino acid + a tRNA + H(+). Hydrolyzes ribosome-free peptidyl-tRNAs (with 1 or more amino acids incorporated), which drop off the ribosome during protein synthesis, or as a result of ribosome stalling. Its function is as follows. Catalyzes the release of premature peptidyl moieties from peptidyl-tRNA molecules trapped in stalled 50S ribosomal subunits, and thus maintains levels of free tRNAs and 50S ribosomes. This chain is Peptidyl-tRNA hydrolase, found in Nitratidesulfovibrio vulgaris (strain DSM 19637 / Miyazaki F) (Desulfovibrio vulgaris).